The primary structure comprises 161 residues: Nuclear transcription factor Y subunit B-3 (161 aa).

The disordered stretch occupies residues 1-23; that stretch reads MADSDNDSGGHKDGGNASTREQD. Ala2 bears the N-acetylalanine mark. Residues 8 to 23 show a composition bias toward basic and acidic residues; sequence SGGHKDGGNASTREQD. The DNA-binding element occupies 26–32; sequence LPIANVS. Positions 53–64 are subunit association domain (SAD); sequence VQECVSEFISFI. The tract at residues 114 to 146 is disordered; it reads EKTTTAGRQGDKEGGGGGGGAGSGSGGAPMYGG. A compositionally biased stretch (gly residues) spans 128–146; it reads GGGGGGAGSGSGGAPMYGG.

It belongs to the NFYB/HAP3 subunit family. As to quaternary structure, heterotrimeric transcription factor composed of three components, NF-YA, NF-YB and NF-YC. NF-YB and NF-YC must interact and dimerize for NF-YA association and DNA binding. Component of a heat stress-inducible transcriptional complex with NF-YA and NF-YB subunits made, at least, of NFYA2, NFYB3 and DPB3-1 in cooperation with DREB2A. Binds directly with DPB3-1. As to expression, ubiquitous. Expressed in seedlings, petioles, hypocotyls, reproductive organ tissues and leaves.

The protein resides in the nucleus. Its subcellular location is the cytoplasm. The protein localises to the cytosol. Component of the NF-Y/HAP transcription factor complex. The NF-Y complex stimulates the transcription of various genes by recognizing and binding to a CCAAT motif in promoters. Promotes the expression of heat stress-inducible genes by contributing to the formation of a heat stress-specific transcriptional complex with NF-Y subunits (e.g. DPB3-1, NF-YA2 and NF-YB3) and DREB2A at the promoter of target genes, thus promoting heat tolerance. In Arabidopsis thaliana (Mouse-ear cress), this protein is Nuclear transcription factor Y subunit B-3.